The chain runs to 210 residues: Small ribosomal subunit protein uS4 (210 aa).

Residues 100 to 160 (GRLDNVVYRM…EKSKNQLRVK (61 aa)) enclose the S4 RNA-binding domain.

This sequence belongs to the universal ribosomal protein uS4 family. Part of the 30S ribosomal subunit. Contacts protein S5. The interaction surface between S4 and S5 is involved in control of translational fidelity.

One of the primary rRNA binding proteins, it binds directly to 16S rRNA where it nucleates assembly of the body of the 30S subunit. Functionally, with S5 and S12 plays an important role in translational accuracy. The polypeptide is Small ribosomal subunit protein uS4 (Alcanivorax borkumensis (strain ATCC 700651 / DSM 11573 / NCIMB 13689 / SK2)).